The following is a 425-amino-acid chain: UPF0761 membrane protein XCV0968 (425 aa).

6 consecutive transmembrane segments (helical) span residues 48–68 (VFAL…FPAF), 105–125 (FTVA…HSIE), 154–174 (GTML…LPLF), 182–202 (LAEF…IVLI), 216–236 (ALPG…GFGF), and 250–270 (ALSA…SVLL).

This sequence belongs to the UPF0761 family.

Its subcellular location is the cell inner membrane. The sequence is that of UPF0761 membrane protein XCV0968 from Xanthomonas euvesicatoria pv. vesicatoria (strain 85-10) (Xanthomonas campestris pv. vesicatoria).